An 893-amino-acid polypeptide reads, in one-letter code: Translation initiation factor IF-2 (893 aa).

Disordered regions lie at residues 135–169 (KAKA…KAEE) and 201–300 (ENEK…ESMD). The segment covering 201 to 224 (ENEKRWAEEEKARKEAEKTVDHHV) has biased composition (basic and acidic residues). A compositionally biased stretch (low complexity) spans 251–265 (PSANAGNNANANAGA). In terms of domain architecture, tr-type G spans 393 to 562 (SRAPVVTIMG…LLEAEVLELK (170 aa)). A G1 region spans residues 402 to 409 (GHVDHGKT). 402-409 (GHVDHGKT) lines the GTP pocket. A G2 region spans residues 427-431 (GITQH). The segment at 448-451 (DTPG) is G3. Residues 448–452 (DTPGH) and 502–505 (NKMD) contribute to the GTP site. The G4 stretch occupies residues 502 to 505 (NKMD). The tract at residues 538–540 (SAK) is G5.

It belongs to the TRAFAC class translation factor GTPase superfamily. Classic translation factor GTPase family. IF-2 subfamily.

The protein resides in the cytoplasm. In terms of biological role, one of the essential components for the initiation of protein synthesis. Protects formylmethionyl-tRNA from spontaneous hydrolysis and promotes its binding to the 30S ribosomal subunits. Also involved in the hydrolysis of GTP during the formation of the 70S ribosomal complex. The chain is Translation initiation factor IF-2 from Shewanella halifaxensis (strain HAW-EB4).